A 100-amino-acid polypeptide reads, in one-letter code: uncharacterized protein (100 aa).

It is found in the cytoplasm. It localises to the endoplasmic reticulum. This is an uncharacterized protein from Schizosaccharomyces pombe (strain 972 / ATCC 24843) (Fission yeast).